The following is a 360-amino-acid chain: Phospho-N-acetylmuramoyl-pentapeptide-transferase (360 aa).

Helical transmembrane passes span 25–45 (RAIL…PWVI), 74–94 (MGGA…SDFG), 97–117 (YVWV…VDDY), 134–154 (YFWQ…TAQA), 168–188 (VALN…VGTS), 199–219 (GLAI…AYLA), 236–256 (AGEL…FLWF), 263–283 (VFMG…VAVI), 288–308 (FVLF…ILQV), and 339–359 (IVRF…TLKF).

Belongs to the glycosyltransferase 4 family. MraY subfamily. It depends on Mg(2+) as a cofactor.

It is found in the cell inner membrane. The enzyme catalyses UDP-N-acetyl-alpha-D-muramoyl-L-alanyl-gamma-D-glutamyl-meso-2,6-diaminopimeloyl-D-alanyl-D-alanine + di-trans,octa-cis-undecaprenyl phosphate = di-trans,octa-cis-undecaprenyl diphospho-N-acetyl-alpha-D-muramoyl-L-alanyl-D-glutamyl-meso-2,6-diaminopimeloyl-D-alanyl-D-alanine + UMP. It functions in the pathway cell wall biogenesis; peptidoglycan biosynthesis. In terms of biological role, catalyzes the initial step of the lipid cycle reactions in the biosynthesis of the cell wall peptidoglycan: transfers peptidoglycan precursor phospho-MurNAc-pentapeptide from UDP-MurNAc-pentapeptide onto the lipid carrier undecaprenyl phosphate, yielding undecaprenyl-pyrophosphoryl-MurNAc-pentapeptide, known as lipid I. The protein is Phospho-N-acetylmuramoyl-pentapeptide-transferase of Cellvibrio japonicus (strain Ueda107) (Pseudomonas fluorescens subsp. cellulosa).